The sequence spans 261 residues: Carbonic anhydrase 1 (261 aa).

Alanine 2 carries the post-translational modification N-acetylalanine. In terms of domain architecture, Alpha-carbonic anhydrase spans 4–261 (PDWGYDDKNG…LKGRTVRASF (258 aa)). Histidine 65 (proton donor/acceptor) is an active-site residue. Zn(2+)-binding residues include histidine 95, histidine 97, and histidine 120. Substrate-binding positions include threonine 200 and 200–201 (TH). The disordered stretch occupies residues 235–261 (EGDNPVPSQRNNRPTQPLKGRTVRASF). Over residues 240-249 (VPSQRNNRPT) the composition is skewed to polar residues.

Belongs to the alpha-carbonic anhydrase family. It depends on Zn(2+) as a cofactor.

Its subcellular location is the cytoplasm. The enzyme catalyses hydrogencarbonate + H(+) = CO2 + H2O. The catalysed reaction is urea = cyanamide + H2O. With respect to regulation, inhibited by acetazolamide. Catalyzes the reversible hydration of carbon dioxide. Can hydrate cyanamide to urea. The sequence is that of Carbonic anhydrase 1 (CA1) from Macaca nemestrina (Pig-tailed macaque).